The primary structure comprises 684 residues: uncharacterized protein (684 aa).

Disordered stretches follow at residues 267-353 (MGAR…TCTD) and 388-449 (SVAS…AERE). Over residues 316–326 (GMTSAKASTSY) the composition is skewed to polar residues. A compositionally biased stretch (basic and acidic residues) spans 438-449 (RPTEARRRAERE).

This is an uncharacterized protein from Colorado tick fever virus (strain USA/Florio N-7180) (CTFV).